The primary structure comprises 84 residues: Molybdopterin synthase sulfur carrier subunit (84 aa).

G84 is modified (1-thioglycine; alternate). G84 is modified (glycyl adenylate; alternate).

This sequence belongs to the MoaD family. MOCS2A subfamily. In terms of assembly, heterotetramer; composed of 2 small (MOCS2A) and 2 large (MOCS2B) subunits. C-terminal thiocarboxylation occurs in 2 steps, it is first acyl-adenylated (-COAMP) via the hesA/moeB/thiF part of MOCS3, then thiocarboxylated (-COSH) via the rhodanese domain of MOCS3.

It is found in the cytoplasm. Its pathway is cofactor biosynthesis; molybdopterin biosynthesis. Functionally, acts as a sulfur carrier required for molybdopterin biosynthesis. Component of the molybdopterin synthase complex that catalyzes the conversion of precursor Z into molybdopterin by mediating the incorporation of 2 sulfur atoms into precursor Z to generate a dithiolene group. In the complex, serves as sulfur donor by being thiocarboxylated (-COSH) at its C-terminus by MOCS3. After interaction with MOCS2B, the sulfur is then transferred to precursor Z to form molybdopterin. The protein is Molybdopterin synthase sulfur carrier subunit of Caenorhabditis elegans.